The primary structure comprises 360 residues: MARYELIKDEIGSIAKYVPGRSIEDIVKNYGLEPSSVIKLGSNENPLGPSPKAVEALIANAQGISIYPSADARELVDAISEYTDIPAANIVASGPGMDGLLDGLARLVIANGDEVVITTPTFSYYEIAARANGATTVYVQREKDFSINVDKLLAALTPNTKMIFLCSPNNPTGNVIPEEDILKIATATDALVFVDEAYVEFAEKNIAHLVLQHDNIIVGRTFSKAFGLAGMRMGYGIMPEWLREEYMKIATPFNVSTAAMAAGIAALSDTEHLNKSIELTVKGKKFLQEELPFKVYDTQANFVLVDVAPHKARDVTTELLKKGIIVRDCTSFAHAGLSLIRVTIGTKEQNEKVVKAFSDI.

Lys-224 bears the N6-(pyridoxal phosphate)lysine mark.

The protein belongs to the class-II pyridoxal-phosphate-dependent aminotransferase family. Histidinol-phosphate aminotransferase subfamily. The cofactor is pyridoxal 5'-phosphate.

The catalysed reaction is L-histidinol phosphate + 2-oxoglutarate = 3-(imidazol-4-yl)-2-oxopropyl phosphate + L-glutamate. Its pathway is amino-acid biosynthesis; L-histidine biosynthesis; L-histidine from 5-phospho-alpha-D-ribose 1-diphosphate: step 7/9. This Methanococcoides burtonii (strain DSM 6242 / NBRC 107633 / OCM 468 / ACE-M) protein is Histidinol-phosphate aminotransferase.